A 391-amino-acid chain; its full sequence is MKKILYVTGSRAEYGIVRRLLTMLRETPEIQLDLAVTGMHCDNAYGNTIHIIEQDNFNIIKVVDININTTSHTHILHSMSVCLNSFGDFFSNNTYDAVMVLGDRYEIFSVAIAASMHNIPLIHIHGGEKTLANYDEFIRHSITKMSKLHLTSTEEYKKRVIQLGEKPGSVFNIGSLGAENALSLHLPNKQELELKYGSLLKRYFVVVFHPETLSTQSVNDQIDELLSAISFFKNTHDFIFIGSNADTGSDIIQRKVKYFCKEYKFRYLISIRSEDYLAMIKYSCGLIGNSSSGLIEVPSLKVATINIGDRQKGRVRGASVIDVPVEKNAIVRGINISQDEKFISVVQSSSNPYFKENALINAVRIIKDFIKSKNKDYKDFYDIPECTTSYD.

In terms of biological role, may be involved in the synthesis of polysialic acid (PSA). In Escherichia coli, this protein is Polysialic acid biosynthesis protein P7 (neuC).